A 260-amino-acid chain; its full sequence is Chlorocatechol 1,2-dioxygenase (260 aa).

Fe cation contacts are provided by Y130, Y164, H188, and H190.

This sequence belongs to the intradiol ring-cleavage dioxygenase family. It depends on Fe(3+) as a cofactor.

The catalysed reaction is 3-chlorocatechol + O2 = (2E,4Z)-2-chloromuconate + 2 H(+). The enzyme catalyses 3,5-dichlorocatechol + O2 = (2E,4E)-2,4-dichloromuconate + 2 H(+). It functions in the pathway aromatic compound metabolism; 3-chlorocatechol degradation. Preferentially converts 3-chlorocatechol and 3,5-dichlorocatechol as opposed to other chlorinated catechols. Retains diminished activity toward non-chlorinated substrates. This Pseudomonas putida (Arthrobacter siderocapsulatus) protein is Chlorocatechol 1,2-dioxygenase (clcA).